A 157-amino-acid polypeptide reads, in one-letter code: SsrA-binding protein (157 aa).

Over residues 136–151 (KRETSAKRDWSREKQR) the composition is skewed to basic and acidic residues. Positions 136-157 (KRETSAKRDWSREKQRLLKQNS) are disordered.

This sequence belongs to the SmpB family.

It is found in the cytoplasm. In terms of biological role, required for rescue of stalled ribosomes mediated by trans-translation. Binds to transfer-messenger RNA (tmRNA), required for stable association of tmRNA with ribosomes. tmRNA and SmpB together mimic tRNA shape, replacing the anticodon stem-loop with SmpB. tmRNA is encoded by the ssrA gene; the 2 termini fold to resemble tRNA(Ala) and it encodes a 'tag peptide', a short internal open reading frame. During trans-translation Ala-aminoacylated tmRNA acts like a tRNA, entering the A-site of stalled ribosomes, displacing the stalled mRNA. The ribosome then switches to translate the ORF on the tmRNA; the nascent peptide is terminated with the 'tag peptide' encoded by the tmRNA and targeted for degradation. The ribosome is freed to recommence translation, which seems to be the essential function of trans-translation. The sequence is that of SsrA-binding protein from Cereibacter sphaeroides (strain ATCC 17029 / ATH 2.4.9) (Rhodobacter sphaeroides).